The primary structure comprises 312 residues: uncharacterized protein (312 aa).

Belongs to the asfivirus CP312R family.

It localises to the virion. This is an uncharacterized protein from African swine fever virus (isolate Tick/Malawi/Lil 20-1/1983) (ASFV).